The chain runs to 92 residues: Neurophysin 2 (92 aa).

7 disulfides stabilise this stretch: Cys7/Cys51, Cys10/Cys24, Cys18/Cys41, Cys25/Cys31, Cys58/Cys70, Cys64/Cys82, and Cys71/Cys76.

Belongs to the vasopressin/oxytocin family.

It localises to the secreted. Neurophysin 2 specifically binds the midbrain peptide hormone vasopressin. The protein is Neurophysin 2 (AVP) of Equus caballus (Horse).